A 179-amino-acid chain; its full sequence is Large ribosomal subunit protein uL6 (179 aa).

The protein belongs to the universal ribosomal protein uL6 family. Part of the 50S ribosomal subunit.

Functionally, this protein binds to the 23S rRNA, and is important in its secondary structure. It is located near the subunit interface in the base of the L7/L12 stalk, and near the tRNA binding site of the peptidyltransferase center. The sequence is that of Large ribosomal subunit protein uL6 from Synechocystis sp. (strain ATCC 27184 / PCC 6803 / Kazusa).